The following is a 206-amino-acid chain: Large ribosomal subunit protein uL4 (206 aa).

The protein belongs to the universal ribosomal protein uL4 family. As to quaternary structure, part of the 50S ribosomal subunit.

One of the primary rRNA binding proteins, this protein initially binds near the 5'-end of the 23S rRNA. It is important during the early stages of 50S assembly. It makes multiple contacts with different domains of the 23S rRNA in the assembled 50S subunit and ribosome. In terms of biological role, forms part of the polypeptide exit tunnel. The polypeptide is Large ribosomal subunit protein uL4 (Desulfatibacillum aliphaticivorans).